A 261-amino-acid polypeptide reads, in one-letter code: GTP cyclohydrolase FolE2 (261 aa).

This sequence belongs to the GTP cyclohydrolase IV family.

The catalysed reaction is GTP + H2O = 7,8-dihydroneopterin 3'-triphosphate + formate + H(+). The protein operates within cofactor biosynthesis; 7,8-dihydroneopterin triphosphate biosynthesis; 7,8-dihydroneopterin triphosphate from GTP: step 1/1. Its function is as follows. Converts GTP to 7,8-dihydroneopterin triphosphate. The chain is GTP cyclohydrolase FolE2 from Fervidobacterium nodosum (strain ATCC 35602 / DSM 5306 / Rt17-B1).